Here is a 185-residue protein sequence, read N- to C-terminus: Protein LURP-one-related 13 (185 aa).

The protein belongs to the LOR family.

Might be related to the phospholipid scramblase and tubby-like superfamily of membrane tethered transcription factors. This is Protein LURP-one-related 13 from Arabidopsis thaliana (Mouse-ear cress).